The chain runs to 297 residues: MSAKETIEKLQNARIITALVTPFKENGQINFGAFPKLIEDLLANHTEGLILAGTTAESPTLTHDEELAIFAAVNKIVDGRIPLIAGVGTNDTRDSVEFVKEVAELGYIDAGLAVTPYYNKPSQEGIYQHFKAIATASDLPIILYNIPGRVVTEIQVETILRLAELENVIAIKECTNTDNLAYLIEKLPKDFLVYTGEDGLAFHTKALGGQGVISVASHILGQEFFEMFAEIDQGSIQKAAAIQRKILPKINALFSVTSPAPIKTVLNAKGYEVGGLRLPLVACTTEESKIILEKIGN.

Thr-55 provides a ligand contact to pyruvate. Tyr-144 serves as the catalytic Proton donor/acceptor. Lys-172 functions as the Schiff-base intermediate with substrate in the catalytic mechanism. Residue Ile-213 coordinates pyruvate.

This sequence belongs to the DapA family. In terms of assembly, homotetramer; dimer of dimers.

It is found in the cytoplasm. The catalysed reaction is L-aspartate 4-semialdehyde + pyruvate = (2S,4S)-4-hydroxy-2,3,4,5-tetrahydrodipicolinate + H2O + H(+). Its pathway is amino-acid biosynthesis; L-lysine biosynthesis via DAP pathway; (S)-tetrahydrodipicolinate from L-aspartate: step 3/4. Catalyzes the condensation of (S)-aspartate-beta-semialdehyde [(S)-ASA] and pyruvate to 4-hydroxy-tetrahydrodipicolinate (HTPA). This Lactococcus lactis subsp. lactis (strain IL1403) (Streptococcus lactis) protein is 4-hydroxy-tetrahydrodipicolinate synthase.